The primary structure comprises 340 residues: Coproporphyrin III ferrochelatase (340 aa).

Fe-coproporphyrin III-binding residues include Ser-52 and Tyr-116. Fe(2+)-binding residues include His-172 and Glu-255.

It belongs to the ferrochelatase family.

The protein resides in the cytoplasm. It catalyses the reaction Fe-coproporphyrin III + 2 H(+) = coproporphyrin III + Fe(2+). Its pathway is porphyrin-containing compound metabolism; protoheme biosynthesis. Functionally, involved in coproporphyrin-dependent heme b biosynthesis. Catalyzes the insertion of ferrous iron into coproporphyrin III to form Fe-coproporphyrin III. This chain is Coproporphyrin III ferrochelatase, found in Mycobacterium marinum (strain ATCC BAA-535 / M).